We begin with the raw amino-acid sequence, 582 residues long: ATP-dependent lipid A-core flippase (582 aa).

5 helical membrane-spanning segments follow: residues 15 to 35 (LWPI…ALVI), 68 to 88 (YVVV…SYCL), 140 to 160 (GALI…AVML), 161 to 181 (YTSW…AVLI), and 254 to 274 (VQII…VPTI). Positions 27 to 310 (VVSGIALVIN…LTNVNAQFQK (284 aa)) constitute an ABC transmembrane type-1 domain. One can recognise an ABC transporter domain in the interval 342–578 (LSFKNVTFTY…NGAYKQLHHI (237 aa)). 376–383 (GRSGSGKS) is a binding site for ATP.

Belongs to the ABC transporter superfamily. Lipid exporter (TC 3.A.1.106) family. In terms of assembly, homodimer.

It localises to the cell inner membrane. It catalyses the reaction ATP + H2O + lipid A-core oligosaccharideSide 1 = ADP + phosphate + lipid A-core oligosaccharideSide 2.. Involved in lipopolysaccharide (LPS) biosynthesis. Translocates lipid A-core from the inner to the outer leaflet of the inner membrane. Transmembrane domains (TMD) form a pore in the inner membrane and the ATP-binding domain (NBD) is responsible for energy generation. This Pasteurella multocida (strain Pm70) protein is ATP-dependent lipid A-core flippase.